A 104-amino-acid polypeptide reads, in one-letter code: Nucleoid-associated protein PEPE_1483 (104 aa).

The interval 1–35 (MRGGMGNMQSMMRQMQKMQKKVTEEQEKLNQTEFT) is disordered. Residues 8 to 17 (MQSMMRQMQK) are compositionally biased toward low complexity. Basic and acidic residues predominate over residues 21–30 (KVTEEQEKLN).

The protein belongs to the YbaB/EbfC family. Homodimer.

It localises to the cytoplasm. The protein localises to the nucleoid. Its function is as follows. Binds to DNA and alters its conformation. May be involved in regulation of gene expression, nucleoid organization and DNA protection. The polypeptide is Nucleoid-associated protein PEPE_1483 (Pediococcus pentosaceus (strain ATCC 25745 / CCUG 21536 / LMG 10740 / 183-1w)).